The sequence spans 116 residues: Large ribosomal subunit protein uL18 (116 aa).

This sequence belongs to the universal ribosomal protein uL18 family. As to quaternary structure, part of the 50S ribosomal subunit; part of the 5S rRNA/L5/L18/L25 subcomplex. Contacts the 5S and 23S rRNAs.

In terms of biological role, this is one of the proteins that bind and probably mediate the attachment of the 5S RNA into the large ribosomal subunit, where it forms part of the central protuberance. This Shewanella oneidensis (strain ATCC 700550 / JCM 31522 / CIP 106686 / LMG 19005 / NCIMB 14063 / MR-1) protein is Large ribosomal subunit protein uL18.